The following is a 187-amino-acid chain: Elongation factor P (187 aa).

Belongs to the elongation factor P family.

Its subcellular location is the cytoplasm. It functions in the pathway protein biosynthesis; polypeptide chain elongation. Functionally, involved in peptide bond synthesis. Stimulates efficient translation and peptide-bond synthesis on native or reconstituted 70S ribosomes in vitro. Probably functions indirectly by altering the affinity of the ribosome for aminoacyl-tRNA, thus increasing their reactivity as acceptors for peptidyl transferase. The chain is Elongation factor P from Helicobacter hepaticus (strain ATCC 51449 / 3B1).